The following is a 61-amino-acid chain: MAKKALVNKAARKPKFAVRGYTRCNKCGRPRAVFRKFGLCRICLREMAHAGELPGVQKSSW.

Zn(2+)-binding residues include Cys-24, Cys-27, Cys-40, and Cys-43.

This sequence belongs to the universal ribosomal protein uS14 family. Zinc-binding uS14 subfamily. In terms of assembly, part of the 30S ribosomal subunit. Contacts proteins S3 and S10. Requires Zn(2+) as cofactor.

In terms of biological role, binds 16S rRNA, required for the assembly of 30S particles and may also be responsible for determining the conformation of the 16S rRNA at the A site. In Mycobacterium avium (strain 104), this protein is Small ribosomal subunit protein uS14.